The following is a 374-amino-acid chain: Tomoregulin-2 (374 aa).

Positions Met-1 to Ala-39 are cleaved as a signal peptide. Topologically, residues Ala-40 to Val-320 are extracellular. N-linked (GlcNAc...) asparagine glycosylation occurs at Asn-55. Kazal-like domains are found at residues Val-90–Thr-137 and Val-181–Asp-229. 9 disulfide bridges follow: Cys-91–Cys-121, Cys-95–Cys-114, Cys-103–Cys-135, Cys-182–Cys-213, Cys-186–Cys-206, Cys-195–Cys-227, Cys-265–Cys-278, Cys-273–Cys-289, and Cys-291–Cys-300. Positions His-261–Glu-301 constitute an EGF-like domain. Positions Lys-303–Val-320 are required for shedding. A helical transmembrane segment spans residues Leu-321–Ile-341. Topologically, residues Thr-342 to Ile-374 are cytoplasmic. Residues Arg-353–Ile-374 form a disordered region. Residues Gln-356–Ile-374 show a composition bias toward polar residues.

This sequence belongs to the tomoregulin family. In terms of processing, O-glycosylated; contains chondroitin sulfate glycosaminoglycans. Post-translationally, a soluble form (TMEFF2-ECD) is produced by proteolytic shedding. This shedding can be induced by phorbol ester or pro-inflammatory cytokines such as TNFalpha, and is mediated by a metalloproteinase ADAM.

It is found in the membrane. In terms of biological role, may be a survival factor for hippocampal and mesencephalic neurons. The shedded form may up-regulate cell proliferation. This is Tomoregulin-2 (TMEFF2) from Bos taurus (Bovine).